A 549-amino-acid polypeptide reads, in one-letter code: Glucose-6-phosphate isomerase (549 aa).

N6-acetyllysine is present on residues lysine 80, lysine 228, and lysine 234. Glutamate 355 functions as the Proton donor in the catalytic mechanism. Residues histidine 386 and lysine 514 contribute to the active site.

The protein belongs to the GPI family.

Its subcellular location is the cytoplasm. The catalysed reaction is alpha-D-glucose 6-phosphate = beta-D-fructose 6-phosphate. The protein operates within carbohydrate biosynthesis; gluconeogenesis. It functions in the pathway carbohydrate degradation; glycolysis; D-glyceraldehyde 3-phosphate and glycerone phosphate from D-glucose: step 2/4. Catalyzes the reversible isomerization of glucose-6-phosphate to fructose-6-phosphate. The protein is Glucose-6-phosphate isomerase of Shigella flexneri serotype 5b (strain 8401).